The chain runs to 159 residues: Putative pre-16S rRNA nuclease (159 aa).

It belongs to the YqgF nuclease family.

It is found in the cytoplasm. Could be a nuclease involved in processing of the 5'-end of pre-16S rRNA. The sequence is that of Putative pre-16S rRNA nuclease from Thermobifida fusca (strain YX).